A 214-amino-acid chain; its full sequence is Large ribosomal subunit protein uL18 (214 aa).

Belongs to the universal ribosomal protein uL18 family. In terms of assembly, part of the 50S ribosomal subunit. Contacts the 5S and 23S rRNAs.

Its function is as follows. This is one of the proteins that bind and probably mediate the attachment of the 5S RNA into the large ribosomal subunit, where it forms part of the central protuberance. The chain is Large ribosomal subunit protein uL18 from Aeropyrum pernix (strain ATCC 700893 / DSM 11879 / JCM 9820 / NBRC 100138 / K1).